Here is a 337-residue protein sequence, read N- to C-terminus: MTLQIGVIGCGAIGQDHIRRLMRTLSGARVVAVNDIDPQQARDAVTHYAPDAEIYADGRDLIAAADVQAVLVTSWGPTHEAFVLDAIAHGKPVFCEKPLAVTADGCMRIVEAELAHGTRLVQVGFMRPYDEGYRALKRVIDSGQIGAPLMLHCAHRNQSVGERYTTDMAITDTLIHELDVLRWLLGEDYVSAQVVYPKKTRHASTHLADPQIVLLETVSGVRIDVEIFVNCQYGYDIQCEVVGENGIAKLPDPPAVGLKHLARQSVEIMTDWKERFIASYDVELQAFIDGVRRQTLTGPSAWDGYAAAVAADACVRAQKSGAVEPIAIAERPAFYRA.

Belongs to the Gfo/Idh/MocA family. In terms of assembly, homotetramer.

It catalyses the reaction myo-inositol + NAD(+) = scyllo-inosose + NADH + H(+). In terms of biological role, involved in the oxidation of myo-inositol (MI) to 2-keto-myo-inositol (2KMI or 2-inosose). This Burkholderia multivorans (strain ATCC 17616 / 249) protein is Inositol 2-dehydrogenase.